Here is a 374-residue protein sequence, read N- to C-terminus: Glutamate 5-kinase (374 aa).

Lys17 is a binding site for ATP. Substrate is bound by residues Ser57, Asp144, and Asn156. ATP contacts are provided by residues 176 to 177 and 218 to 224; these read SD and TGGMVTK. The PUA domain occupies 280-358; it reads QGALVLDDGA…RELARELGPA (79 aa).

The protein belongs to the glutamate 5-kinase family.

It localises to the cytoplasm. It carries out the reaction L-glutamate + ATP = L-glutamyl 5-phosphate + ADP. It functions in the pathway amino-acid biosynthesis; L-proline biosynthesis; L-glutamate 5-semialdehyde from L-glutamate: step 1/2. Functionally, catalyzes the transfer of a phosphate group to glutamate to form L-glutamate 5-phosphate. The polypeptide is Glutamate 5-kinase (Streptomyces coelicolor (strain ATCC BAA-471 / A3(2) / M145)).